Reading from the N-terminus, the 202-residue chain is Imidazoleglycerol-phosphate dehydratase (202 aa).

It belongs to the imidazoleglycerol-phosphate dehydratase family.

The protein localises to the cytoplasm. It catalyses the reaction D-erythro-1-(imidazol-4-yl)glycerol 3-phosphate = 3-(imidazol-4-yl)-2-oxopropyl phosphate + H2O. The protein operates within amino-acid biosynthesis; L-histidine biosynthesis; L-histidine from 5-phospho-alpha-D-ribose 1-diphosphate: step 6/9. The protein is Imidazoleglycerol-phosphate dehydratase of Acinetobacter baumannii (strain AYE).